Consider the following 267-residue polypeptide: 2-keto-3-deoxy-L-rhamnonate aldolase (267 aa).

The active-site Proton acceptor is H49. Q151 serves as a coordination point for substrate. E153 serves as a coordination point for Mg(2+). Residues A178 and D179 each contribute to the substrate site. Residue D179 participates in Mg(2+) binding.

Belongs to the HpcH/HpaI aldolase family. KDR aldolase subfamily. Homohexamer. It depends on Mg(2+) as a cofactor.

The catalysed reaction is 2-dehydro-3-deoxy-L-rhamnonate = (S)-lactaldehyde + pyruvate. Catalyzes the reversible retro-aldol cleavage of 2-keto-3-deoxy-L-rhamnonate (KDR) to pyruvate and lactaldehyde. The chain is 2-keto-3-deoxy-L-rhamnonate aldolase from Salmonella dublin (strain CT_02021853).